The following is a 154-amino-acid chain: Transcriptional repressor NrdR (154 aa).

The segment at 3-34 is a zinc-finger region; the sequence is CPFCRHPDSRVVDSRETDEGQAIRRRRSCPEC. An ATP-cone domain is found at 46-136; sequence LAVVKRSGVT…VYRSFSSAED (91 aa).

Belongs to the NrdR family. Zn(2+) serves as cofactor.

Its function is as follows. Negatively regulates transcription of bacterial ribonucleotide reductase nrd genes and operons by binding to NrdR-boxes. In Mycolicibacterium gilvum (strain PYR-GCK) (Mycobacterium gilvum (strain PYR-GCK)), this protein is Transcriptional repressor NrdR.